The chain runs to 319 residues: 4-hydroxy-3-methylbut-2-enyl diphosphate reductase (319 aa).

Cys12 contacts [4Fe-4S] cluster. His41 and His74 together coordinate (2E)-4-hydroxy-3-methylbut-2-enyl diphosphate. The dimethylallyl diphosphate site is built by His41 and His74. The isopentenyl diphosphate site is built by His41 and His74. Cys96 provides a ligand contact to [4Fe-4S] cluster. (2E)-4-hydroxy-3-methylbut-2-enyl diphosphate is bound at residue His124. Dimethylallyl diphosphate is bound at residue His124. Residue His124 coordinates isopentenyl diphosphate. The Proton donor role is filled by Glu126. Thr167 contacts (2E)-4-hydroxy-3-methylbut-2-enyl diphosphate. Cys197 contributes to the [4Fe-4S] cluster binding site. Ser225, Ser226, Asn227, and Ser269 together coordinate (2E)-4-hydroxy-3-methylbut-2-enyl diphosphate. Positions 225, 226, 227, and 269 each coordinate dimethylallyl diphosphate. Ser225, Ser226, Asn227, and Ser269 together coordinate isopentenyl diphosphate.

This sequence belongs to the IspH family. In terms of assembly, homodimer. [4Fe-4S] cluster serves as cofactor.

It carries out the reaction isopentenyl diphosphate + 2 oxidized [2Fe-2S]-[ferredoxin] + H2O = (2E)-4-hydroxy-3-methylbut-2-enyl diphosphate + 2 reduced [2Fe-2S]-[ferredoxin] + 2 H(+). The enzyme catalyses dimethylallyl diphosphate + 2 oxidized [2Fe-2S]-[ferredoxin] + H2O = (2E)-4-hydroxy-3-methylbut-2-enyl diphosphate + 2 reduced [2Fe-2S]-[ferredoxin] + 2 H(+). It functions in the pathway isoprenoid biosynthesis; dimethylallyl diphosphate biosynthesis; dimethylallyl diphosphate from (2E)-4-hydroxy-3-methylbutenyl diphosphate: step 1/1. It participates in isoprenoid biosynthesis; isopentenyl diphosphate biosynthesis via DXP pathway; isopentenyl diphosphate from 1-deoxy-D-xylulose 5-phosphate: step 6/6. Its function is as follows. Catalyzes the conversion of 1-hydroxy-2-methyl-2-(E)-butenyl 4-diphosphate (HMBPP) into a mixture of isopentenyl diphosphate (IPP) and dimethylallyl diphosphate (DMAPP). Acts in the terminal step of the DOXP/MEP pathway for isoprenoid precursor biosynthesis. The chain is 4-hydroxy-3-methylbut-2-enyl diphosphate reductase from Buchnera aphidicola subsp. Acyrthosiphon pisum (strain Tuc7).